Consider the following 187-residue polypeptide: MTEYKLVIVGGGGVGKSALTIQLIQNHFIDEYDPTIEDSYRKQVSIDDETCLLDILDTAGQEEYSAMRDQYMRTGQGFLCVYSITSRSSYDEIASFREQILRVKDKDRVPLILVGNKADLDHERQVSVNEGQELAKGFNCPFMESSAKSRINVEEAFYSLVREIRKELKGDQSSGKAQKKKKQCLIL.

10–17 (GGGGVGKS) serves as a coordination point for GTP. The short motif at 32 to 40 (YDPTIEDSY) is the Effector region element. GTP-binding positions include 57–61 (DTAGQ) and 116–119 (NKAD). Position 184 is a cysteine methyl ester (C184). A lipid anchor (S-geranylgeranyl cysteine) is attached at C184. Positions 185–187 (LIL) are cleaved as a propeptide — removed in mature form.

The protein belongs to the small GTPase superfamily. Ras family.

It is found in the cell membrane. It carries out the reaction GTP + H2O = GDP + phosphate + H(+). Its activity is regulated as follows. Alternates between an inactive form bound to GDP and an active form bound to GTP. Activated by a guanine nucleotide-exchange factor (GEF) and inactivated by a GTPase-activating protein (GAP). In terms of biological role, ras proteins bind GDP/GTP and possess intrinsic GTPase activity. This chain is Ras-like protein rasD (rasD), found in Dictyostelium discoideum (Social amoeba).